The chain runs to 893 residues: MKNKKALFIPLFIIILFIAFFNKIINFIINIKWFKEVNYLAVYFTKMRAIIILMIPIFIIFFISIWMYYKSLIINKNKSVVDIGLNKNNYGKKLFFIFNFIVSIFLAYIFSSSYWYRILQFNNSVDFNVKDPIFFKDVSFYIFKLPLFESLYKVIISLLLFLVITTFIAYFILEAKYKIQSKKDINLKNINHGIKSFAGKQLAIVSGLIILFISFGHLIKIWNLVYSSNGVSFGASYTDVHATLLFYKIIVVITLISSIVTLLSIVKGKFKPVSICIGITIFLIVSQNIASFLVQNFIVKSNEKTLEQPYIKNNIDLTRKAFALDDIEIRDFDIKNDLQKQDITDNKASIDNIRINSFKPTLEFYNQVQIIRYYYTFNDIDIDRYNINGKYNQVFLAAREIDTDALNPNTWQNRHLIYTHGFGAVMNKVNSVTSEGQPDFVIKDIPPYNKTNIKLANPRIYFGEKTNDYVIVNTKINEFDYPKEDSNKTNKYNGHAGIKMSFINRLLFAINKKDINFLLSKDIKKDSKIIINRNIVERAKKIAPFLTYDSDPYMVIYNGKIYWIIDAYTTTNRYPYSEPYDSINYIRNSAKVVIDSVDGDINFYITDKKDPIVNNYAKIFKGLFKEEKDAPKEIREHFRYPKDLFSIQSKVLGKYHVKDPGVFYNGEDLWEVSKDQKHVEGETNTNDAPYIIMKLPDQNKEEMVLLNYFNVMKKDNMIALFGARMDGEQYGKKILYKLPSDKTVYSPYLFKQKINQDTNISKELSLWNREGSKVQYGDTIILPIKNSLLYIEPLYLRASGKNSIPEMKRVILSYNDKLVLSSSIQEGIKEIFNSKDNKINDKNEKDSTKTIDDSKLKKAQEYYNKAIEAQKNGDWTKYGENINELGNILNSIK.

Transmembrane regions (helical) follow at residues 9–29 (IPLF…NFII), 49–69 (AIII…WMYY), 94–114 (LFFI…SSSY), 154–174 (VIIS…FILE), 202–222 (LAIV…IKIW), 246–266 (FYKI…LSIV), and 273–293 (VSIC…ASFL).

This sequence belongs to the UPF0182 family.

Its subcellular location is the cell membrane. This is UPF0182 protein CLB_0018 from Clostridium botulinum (strain ATCC 19397 / Type A).